Here is a 227-residue protein sequence, read N- to C-terminus: Trypsin (227 aa).

The Peptidase S1 domain maps to 1 to 223; that stretch reads IVGGEDANVQ…YYDVLMEQIN (223 aa). Cysteine 27 and cysteine 43 are joined by a disulfide. Catalysis depends on charge relay system residues histidine 42 and aspartate 88. Intrachain disulfides connect cysteine 150/cysteine 164 and cysteine 175/cysteine 199. Catalysis depends on serine 179, which acts as the Charge relay system.

The protein belongs to the peptidase S1 family.

It catalyses the reaction Preferential cleavage: Arg-|-Xaa, Lys-|-Xaa.. The polypeptide is Trypsin (Saccharopolyspora erythraea (Streptomyces erythraeus)).